A 335-amino-acid polypeptide reads, in one-letter code: S-adenosylmethionine decarboxylase proenzyme (335 aa).

Residues E12 and E15 contribute to the active site. The active-site Schiff-base intermediate with substrate; via pyruvic acid is S70. S70 carries the post-translational modification Pyruvic acid (Ser); by autocatalysis. C84 (proton donor; for catalytic activity) is an active-site residue. Catalysis depends on proton acceptor; for processing activity residues S231 and H245.

This sequence belongs to the eukaryotic AdoMetDC family. Pyruvate is required as a cofactor. In terms of processing, is synthesized initially as an inactive proenzyme. Formation of the active enzyme involves a self-maturation process in which the active site pyruvoyl group is generated from an internal serine residue via an autocatalytic post-translational modification. Two non-identical subunits are generated from the proenzyme in this reaction, and the pyruvate is formed at the N-terminus of the alpha chain, which is derived from the carboxyl end of the proenzyme. The post-translation cleavage follows an unusual pathway, termed non-hydrolytic serinolysis, in which the side chain hydroxyl group of the serine supplies its oxygen atom to form the C-terminus of the beta chain, while the remainder of the serine residue undergoes an oxidative deamination to produce ammonia and the pyruvoyl group blocking the N-terminus of the alpha chain.

It catalyses the reaction S-adenosyl-L-methionine + H(+) = S-adenosyl 3-(methylsulfanyl)propylamine + CO2. It participates in amine and polyamine biosynthesis; S-adenosylmethioninamine biosynthesis; S-adenosylmethioninamine from S-adenosyl-L-methionine: step 1/1. Essential for biosynthesis of the polyamines spermidine and spermine. Promotes maintenance and self-renewal of embryonic stem cells, by maintaining spermine levels. The sequence is that of S-adenosylmethionine decarboxylase proenzyme (amd1) from Xenopus laevis (African clawed frog).